A 175-amino-acid chain; its full sequence is Large ribosomal subunit protein uL10 (175 aa).

Belongs to the universal ribosomal protein uL10 family. As to quaternary structure, part of the ribosomal stalk of the 50S ribosomal subunit. The N-terminus interacts with L11 and the large rRNA to form the base of the stalk. The C-terminus forms an elongated spine to which L12 dimers bind in a sequential fashion forming a multimeric L10(L12)X complex.

Forms part of the ribosomal stalk, playing a central role in the interaction of the ribosome with GTP-bound translation factors. This is Large ribosomal subunit protein uL10 from Psychrobacter cryohalolentis (strain ATCC BAA-1226 / DSM 17306 / VKM B-2378 / K5).